A 179-amino-acid chain; its full sequence is Protein GrpE (179 aa).

A disordered region spans residues 1-29 (MQDQDKYAEQAASIEDPVTAEAASATTPT).

It belongs to the GrpE family. As to quaternary structure, homodimer.

It localises to the cytoplasm. Its function is as follows. Participates actively in the response to hyperosmotic and heat shock by preventing the aggregation of stress-denatured proteins, in association with DnaK and GrpE. It is the nucleotide exchange factor for DnaK and may function as a thermosensor. Unfolded proteins bind initially to DnaJ; upon interaction with the DnaJ-bound protein, DnaK hydrolyzes its bound ATP, resulting in the formation of a stable complex. GrpE releases ADP from DnaK; ATP binding to DnaK triggers the release of the substrate protein, thus completing the reaction cycle. Several rounds of ATP-dependent interactions between DnaJ, DnaK and GrpE are required for fully efficient folding. This is Protein GrpE from Janthinobacterium sp. (strain Marseille) (Minibacterium massiliensis).